The chain runs to 118 residues: Small ribosomal subunit protein uS13 (118 aa).

It belongs to the universal ribosomal protein uS13 family. As to quaternary structure, part of the 30S ribosomal subunit. Forms a loose heterodimer with protein S19. Forms two bridges to the 50S subunit in the 70S ribosome.

Its function is as follows. Located at the top of the head of the 30S subunit, it contacts several helices of the 16S rRNA. In the 70S ribosome it contacts the 23S rRNA (bridge B1a) and protein L5 of the 50S subunit (bridge B1b), connecting the 2 subunits; these bridges are implicated in subunit movement. Contacts the tRNAs in the A and P-sites. The polypeptide is Small ribosomal subunit protein uS13 (Carsonella ruddii (strain PV)).